The following is a 515-amino-acid chain: Dimethylnonatriene synthase (515 aa).

Residues Phe-3–Ile-23 traverse the membrane as a helical segment. Position 219 (His-219) interacts with substrate. Lys-252 participates in a covalent cross-link: Glycyl lysine isopeptide (Lys-Gly) (interchain with G-Cter in ubiquitin). Cys-452 provides a ligand contact to heme.

It belongs to the cytochrome P450 family. The cofactor is heme. In terms of tissue distribution, expressed in stems, flower peduncles, receptacle of developing and mature flowers and in stigma of mature opening flower buds.

It is found in the membrane. It catalyses the reaction (3S,6E)-nerolidol + reduced [NADPH--hemoprotein reductase] + O2 = (3E)-4,8-dimethylnona-1,3,7-triene + but-3-en-2-one + oxidized [NADPH--hemoprotein reductase] + 2 H2O + H(+). The catalysed reaction is (6E,10E)-geranyllinalool + reduced [NADPH--hemoprotein reductase] + O2 = (3E,7E)-4,8,12-trimethyltrideca 1,3,7,11-tetraene + but-3-en-2-one + oxidized [NADPH--hemoprotein reductase] + 2 H2O + H(+). Its pathway is secondary metabolite biosynthesis; terpenoid biosynthesis. Functionally, involved in the biosynthesis of homoterpenes, attractants of herbivores parasitoids and predators (e.g. predatory mites and parasitoid wasps). Catalyzes the conversion of the C20 (E,E)-geranyllinalool to C16-homoterpene 4,8,12-trimethyltrideca-1,3,7,11-tetraene (TMTT) of the C15 (E)-nerolidol to C11-homoterpene (E)-4,8-dimethyl-1,3,7-nonatriene (DMNT); these volatile compounds are produced upon insect herbivore attack and emitted from flowers and vegetative tissues during herbivore feeding. Required during resistance responses to the fungus Alternaria brassicae. Prevents oviposition of the phloem-feeding insect cabbage whitefly (Aleyrodes proletella). This chain is Dimethylnonatriene synthase, found in Arabidopsis thaliana (Mouse-ear cress).